Reading from the N-terminus, the 453-residue chain is MSPQTETKASVGFKAGVKEYKLTYYTPEYQTKDTDILAAFRVTPQPGVPPEERGAAVAAESSTGTWTTVWTDGLTSLDRYKGRCYHIEPVAGEENQYIAYVAYPLDLFEEGSVTNMFTSIVGNVFGFKALRALRLEDLRIPIAYVKTFQGPPHGIQVERDKLNKYGRPLLGCTIKPKLGLSAKNYGRAVYECLRGGLDFTKDDENVNSQPFMRWRDRFLFCAEALFKAQAETGEIKGHYLNATAGTCEEMMKRAVFARELGTPIVMHDYLTGGFTANTTLAHYCRDNGLLLHIHRAMHAVIDRQKNHGMHFRVLAKALRMSGGDHIHAGTVVGKLEGERDITLGFVDLLRDDYIEKDRSRGIYFTQDWVSLPGVIPVASRGIHVWHMPALTEIFGDDSVLQFGGGTLGHPWGNAPGAVANRVALEACVKARNEGRDLAAEGTLVIREARKWSP.

Residues 1-2 constitute a propeptide that is removed on maturation; the sequence is MS. Pro-3 is subject to N-acetylproline. Residue Lys-14 is modified to N6,N6,N6-trimethyllysine. Substrate-binding residues include Asn-123 and Thr-173. Lys-175 serves as the catalytic Proton acceptor. Lys-177 lines the substrate pocket. The Mg(2+) site is built by Lys-201, Asp-203, and Glu-204. Lys-201 carries the post-translational modification N6-carboxylysine. The Proton acceptor role is filled by His-294. Substrate contacts are provided by Arg-295, His-327, and Ser-379.

Belongs to the RuBisCO large chain family. Type I subfamily. In terms of assembly, heterohexadecamer of 8 large chains and 8 small chains; disulfide-linked. The disulfide link is formed within the large subunit homodimers. It depends on Mg(2+) as a cofactor. In terms of processing, the disulfide bond which can form in the large chain dimeric partners within the hexadecamer appears to be associated with oxidative stress and protein turnover.

The protein localises to the plastid. The protein resides in the chloroplast. The catalysed reaction is 2 (2R)-3-phosphoglycerate + 2 H(+) = D-ribulose 1,5-bisphosphate + CO2 + H2O. The enzyme catalyses D-ribulose 1,5-bisphosphate + O2 = 2-phosphoglycolate + (2R)-3-phosphoglycerate + 2 H(+). Its function is as follows. RuBisCO catalyzes two reactions: the carboxylation of D-ribulose 1,5-bisphosphate, the primary event in carbon dioxide fixation, as well as the oxidative fragmentation of the pentose substrate in the photorespiration process. Both reactions occur simultaneously and in competition at the same active site. This chain is Ribulose bisphosphate carboxylase large chain, found in Hydnophytum formicarum (Ant plant).